The primary structure comprises 289 residues: ATP synthase gamma chain (289 aa).

It belongs to the ATPase gamma chain family. As to quaternary structure, F-type ATPases have 2 components, CF(1) - the catalytic core - and CF(0) - the membrane proton channel. CF(1) has five subunits: alpha(3), beta(3), gamma(1), delta(1), epsilon(1). CF(0) has three main subunits: a, b and c.

It localises to the cell inner membrane. Produces ATP from ADP in the presence of a proton gradient across the membrane. The gamma chain is believed to be important in regulating ATPase activity and the flow of protons through the CF(0) complex. This is ATP synthase gamma chain from Histophilus somni (strain 129Pt) (Haemophilus somnus).